Reading from the N-terminus, the 282-residue chain is Acetyl-coenzyme A carboxylase carboxyl transferase subunit beta (282 aa).

In terms of domain architecture, CoA carboxyltransferase N-terminal spans 29–282; that stretch reads LMKRCPNCGL…LLKYGGMQDD (254 aa). C33, C36, C51, and C54 together coordinate Zn(2+). The segment at 33-54 adopts a C4-type zinc-finger fold; sequence CPNCGLEFFARRLDKYKTCPDC.

It belongs to the AccD/PCCB family. As to quaternary structure, acetyl-CoA carboxylase is a heterohexamer composed of biotin carboxyl carrier protein (AccB), biotin carboxylase (AccC) and two subunits each of ACCase subunit alpha (AccA) and ACCase subunit beta (AccD). Zn(2+) is required as a cofactor.

The protein resides in the cytoplasm. It carries out the reaction N(6)-carboxybiotinyl-L-lysyl-[protein] + acetyl-CoA = N(6)-biotinyl-L-lysyl-[protein] + malonyl-CoA. The protein operates within lipid metabolism; malonyl-CoA biosynthesis; malonyl-CoA from acetyl-CoA: step 1/1. Functionally, component of the acetyl coenzyme A carboxylase (ACC) complex. Biotin carboxylase (BC) catalyzes the carboxylation of biotin on its carrier protein (BCCP) and then the CO(2) group is transferred by the transcarboxylase to acetyl-CoA to form malonyl-CoA. This Lactobacillus delbrueckii subsp. bulgaricus (strain ATCC 11842 / DSM 20081 / BCRC 10696 / JCM 1002 / NBRC 13953 / NCIMB 11778 / NCTC 12712 / WDCM 00102 / Lb 14) protein is Acetyl-coenzyme A carboxylase carboxyl transferase subunit beta.